We begin with the raw amino-acid sequence, 202 residues long: Outer-membrane lipoprotein carrier protein (202 aa).

An N-terminal signal peptide occupies residues methionine 1–alanine 21.

Belongs to the LolA family. Monomer.

It localises to the periplasm. Its function is as follows. Participates in the translocation of lipoproteins from the inner membrane to the outer membrane. Only forms a complex with a lipoprotein if the residue after the N-terminal Cys is not an aspartate (The Asp acts as a targeting signal to indicate that the lipoprotein should stay in the inner membrane). This chain is Outer-membrane lipoprotein carrier protein, found in Yersinia pestis bv. Antiqua (strain Antiqua).